The sequence spans 347 residues: Heat-inducible transcription repressor HrcA (347 aa).

Belongs to the HrcA family.

Functionally, negative regulator of class I heat shock genes (grpE-dnaK-dnaJ and groELS operons). Prevents heat-shock induction of these operons. The polypeptide is Heat-inducible transcription repressor HrcA (Sphingopyxis alaskensis (strain DSM 13593 / LMG 18877 / RB2256) (Sphingomonas alaskensis)).